We begin with the raw amino-acid sequence, 276 residues long: 4-deoxy-L-threo-5-hexosulose-uronate ketol-isomerase (276 aa).

Residues H194, H196, E201, and H243 each coordinate Zn(2+).

It belongs to the KduI family. Zn(2+) serves as cofactor.

It catalyses the reaction 5-dehydro-4-deoxy-D-glucuronate = 3-deoxy-D-glycero-2,5-hexodiulosonate. The protein operates within glycan metabolism; pectin degradation; 2-dehydro-3-deoxy-D-gluconate from pectin: step 4/5. Catalyzes the isomerization of 5-dehydro-4-deoxy-D-glucuronate to 3-deoxy-D-glycero-2,5-hexodiulosonate. The protein is 4-deoxy-L-threo-5-hexosulose-uronate ketol-isomerase of Caldicellulosiruptor bescii (strain ATCC BAA-1888 / DSM 6725 / KCTC 15123 / Z-1320) (Anaerocellum thermophilum).